Consider the following 226-residue polypeptide: tRNA (guanine-N(7)-)-methyltransferase (226 aa).

The tract at residues 1-21 (MTHPQQPHGPLRSFGRLKSRP) is disordered. 4 residues coordinate S-adenosyl-L-methionine: E59, E84, D111, and D133. D133 is a catalytic residue. K137 contacts substrate. The segment at 139 to 144 (RHNKRR) is interaction with RNA. Residues D169 and 206 to 209 (TRYE) each bind substrate.

This sequence belongs to the class I-like SAM-binding methyltransferase superfamily. TrmB family.

The catalysed reaction is guanosine(46) in tRNA + S-adenosyl-L-methionine = N(7)-methylguanosine(46) in tRNA + S-adenosyl-L-homocysteine. Its pathway is tRNA modification; N(7)-methylguanine-tRNA biosynthesis. Its function is as follows. Catalyzes the formation of N(7)-methylguanine at position 46 (m7G46) in tRNA. This is tRNA (guanine-N(7)-)-methyltransferase from Caulobacter sp. (strain K31).